A 235-amino-acid polypeptide reads, in one-letter code: Glucosamine-6-phosphate deaminase (235 aa).

Asp62 serves as the catalytic Proton acceptor; for enolization step. Asn128 serves as the catalytic For ring-opening step. Catalysis depends on His130, which acts as the Proton acceptor; for ring-opening step. Residue Glu135 is the For ring-opening step of the active site.

Belongs to the glucosamine/galactosamine-6-phosphate isomerase family. NagB subfamily.

The catalysed reaction is alpha-D-glucosamine 6-phosphate + H2O = beta-D-fructose 6-phosphate + NH4(+). Its pathway is amino-sugar metabolism; N-acetylneuraminate degradation; D-fructose 6-phosphate from N-acetylneuraminate: step 5/5. In terms of biological role, catalyzes the reversible isomerization-deamination of glucosamine 6-phosphate (GlcN6P) to form fructose 6-phosphate (Fru6P) and ammonium ion. This is Glucosamine-6-phosphate deaminase from Streptococcus sanguinis (strain SK36).